The following is a 343-amino-acid chain: Biotin synthase 2 (343 aa).

Residues 58–285 form the Radical SAM core domain; it reads NEVQLSTLLS…LTMVRLSAGR (228 aa). Residues Cys73, Cys77, and Cys80 each coordinate [4Fe-4S] cluster. The [2Fe-2S] cluster site is built by Cys117, Cys148, Cys208, and Arg280.

It belongs to the radical SAM superfamily. Biotin synthase family. In terms of assembly, homodimer. [4Fe-4S] cluster is required as a cofactor. It depends on [2Fe-2S] cluster as a cofactor.

It carries out the reaction (4R,5S)-dethiobiotin + (sulfur carrier)-SH + 2 reduced [2Fe-2S]-[ferredoxin] + 2 S-adenosyl-L-methionine = (sulfur carrier)-H + biotin + 2 5'-deoxyadenosine + 2 L-methionine + 2 oxidized [2Fe-2S]-[ferredoxin]. The protein operates within cofactor biosynthesis; biotin biosynthesis; biotin from 7,8-diaminononanoate: step 2/2. Catalyzes the conversion of dethiobiotin (DTB) to biotin by the insertion of a sulfur atom into dethiobiotin via a radical-based mechanism. The polypeptide is Biotin synthase 2 (Polaromonas sp. (strain JS666 / ATCC BAA-500)).